We begin with the raw amino-acid sequence, 261 residues long: Dienlactone hydrolase 1 (261 aa).

Residues Cys147, Asp194, and His226 contribute to the active site.

Belongs to the dienelactone hydrolase family.

It participates in xenobiotic degradation. In terms of biological role, dienlactone hydrolase; part of the Fusarium detoxification of benzoxazolinone cluster 1 (FDB1) involved in the degradation of benzoxazolinones produced by the host plant. Maize, wheat, and rye produce the 2 benzoxazinone phytoanticipins 2,4-dihy-droxy-7-methoxy-1,4-benzoxazin-3-one (DIMBOA) and 2,4-dihydroxy-1,4-benzoxazin-3-one (DIBOA) that, due to their inherent instability once released, spontaneously degrade to the more stable corresponding benzoxazolinones, 6-methoxy-2-benzoxazolinone (MBOA) and 2-benzoxazolinone (BOA), respectively. The first step in the detoxification of benzoxazolinones involves the hydrolysis of the cyclic ester bond of benzoxazolinones by the FDB1 cluster gamma-lactamase MBL1 to aminophenols. MBL1 is able to convert BOA into 2-aminophenol (2-AP), as well as MBOA into 5-methoxy-2-aminophenol (2-AMP). The FDB2 cluster N-malonyltransferase FDB2/NAT1 then metabolizes aminophenols via N-malonylation to non-toxic malonamic acids. FDB2/NAT1 converts 2-AP into N-(2-hydroxyphenyl) malonamic acid (HPMA) and 2-AMP into N-(2-hydroxy-4-methoxyphenyl) malonamic acid (HMPMA). The duplicated dienlactone hydrolases DLH1 and DLH2 may provide redundant function for hydrolyzing the lactone moiety in the BOA molecule. The roles of the amidases and other enzymes encoded by the 2 FDB clusters have not been identified so far. In Gibberella moniliformis (strain M3125 / FGSC 7600) (Maize ear and stalk rot fungus), this protein is Dienlactone hydrolase 1.